Reading from the N-terminus, the 844-residue chain is 3',5'-cyclic-AMP phosphodiesterase 4A (844 aa).

Residues 1–124 (MEPPAAPSER…RSPLDSQASP (124 aa)) form a disordered region. Ser-13 carries the post-translational modification Phosphoserine. Positions 36–46 (QPRTPIRIQQR) are enriched in low complexity. Over residues 51–78 (SAERSEPERSPHRPIERADAVDTGDRPG) the composition is skewed to basic and acidic residues. Positions 82–91 (TRMSWPSSFH) are enriched in polar residues. Residues Ser-147, Ser-152, Ser-160, Ser-204, and Ser-333 each carry the phosphoserine modification. Residues 343 to 672 (VKTDQEDLLA…DWYHSAIRQS (330 aa)) enclose the PDEase domain. Residue Lys-344 forms a Glycyl lysine isopeptide (Lys-Gly) (interchain with G-Cter in SUMO) linkage. His-419 functions as the Proton donor in the catalytic mechanism. His-419 contributes to the 3',5'-cyclic AMP binding site. AMP-binding residues include His-419 and His-423. Residues His-423, His-459, Asp-460, and Asp-577 each contribute to the Zn(2+) site. Asp-460, Asp-577, Gln-628, and Phe-631 together coordinate AMP. Mg(2+) is bound at residue Asp-460. Asp-460 contributes to the Mn(2+) binding site. 3',5'-cyclic AMP contacts are provided by Gln-628 and Phe-631. Phosphoserine occurs at positions 672 and 674. The interval 819 to 844 (ACSGTSGDNSAVISAPGRWGSGGDPA) is disordered. Over residues 820–830 (CSGTSGDNSAV) the composition is skewed to polar residues.

This sequence belongs to the cyclic nucleotide phosphodiesterase family. PDE4 subfamily. Interacts with LYN (via SH3 domain). Interacts with ARRB2. Zn(2+) serves as cofactor. Mg(2+) is required as a cofactor. It depends on Mn(2+) as a cofactor. Post-translationally, proteolytically cleaved by CASP3.

It localises to the cytoplasm. It is found in the cytosol. The protein localises to the membrane. It catalyses the reaction 3',5'-cyclic AMP + H2O = AMP + H(+). It functions in the pathway purine metabolism; 3',5'-cyclic AMP degradation; AMP from 3',5'-cyclic AMP: step 1/1. Inhibited by rolipram and diazepam. Its function is as follows. Hydrolyzes the second messenger 3',5'-cyclic AMP (cAMP), which is a key regulator of many important physiological processes. In terms of biological role, efficiently hydrolyzes cAMP. The protein is 3',5'-cyclic-AMP phosphodiesterase 4A (Pde4a) of Mus musculus (Mouse).